The chain runs to 53 residues: uncharacterized protein (53 aa).

The N-terminal stretch at 1 to 23 is a signal peptide; the sequence is MSILLKILFKLLLLILSITFVIT.

This is an uncharacterized protein from Acheta domesticus (House cricket).